An 89-amino-acid polypeptide reads, in one-letter code: Small ribosomal subunit protein uS15 (89 aa).

It belongs to the universal ribosomal protein uS15 family. As to quaternary structure, part of the 30S ribosomal subunit. Forms a bridge to the 50S subunit in the 70S ribosome, contacting the 23S rRNA.

Functionally, one of the primary rRNA binding proteins, it binds directly to 16S rRNA where it helps nucleate assembly of the platform of the 30S subunit by binding and bridging several RNA helices of the 16S rRNA. Forms an intersubunit bridge (bridge B4) with the 23S rRNA of the 50S subunit in the ribosome. This chain is Small ribosomal subunit protein uS15, found in Ureaplasma parvum serovar 3 (strain ATCC 27815 / 27 / NCTC 11736).